A 295-amino-acid chain; its full sequence is Accessory protein VasW (295 aa).

In terms of biological role, plays an accessory role in VasX-mediated bacterial killing. In Vibrio cholerae serotype O1 (strain ATCC 39315 / El Tor Inaba N16961), this protein is Accessory protein VasW.